The sequence spans 548 residues: Non-structural protein NS1 (548 aa).

The protein belongs to the orbivirus non-structural protein NS1 family.

This chain is Non-structural protein NS1 (Segment-5), found in Camelus dromedarius (Dromedary).